We begin with the raw amino-acid sequence, 198 residues long: Dephospho-CoA kinase (198 aa).

Residues 4 to 198 (RIGLTGGIAS…CGLRADGTTW (195 aa)) enclose the DPCK domain. Residue 12–17 (ASGKSS) participates in ATP binding.

This sequence belongs to the CoaE family.

The protein localises to the cytoplasm. It carries out the reaction 3'-dephospho-CoA + ATP = ADP + CoA + H(+). It participates in cofactor biosynthesis; coenzyme A biosynthesis; CoA from (R)-pantothenate: step 5/5. Its function is as follows. Catalyzes the phosphorylation of the 3'-hydroxyl group of dephosphocoenzyme A to form coenzyme A. This is Dephospho-CoA kinase from Parasynechococcus marenigrum (strain WH8102).